Consider the following 282-residue polypeptide: Pantothenate synthetase (282 aa).

30–37 (MGYLHEGH) contacts ATP. His37 serves as the catalytic Proton donor. Residue Gln61 participates in (R)-pantoate binding. Gln61 is a binding site for beta-alanine. 147–150 (GMKD) serves as a coordination point for ATP. Gln153 is a (R)-pantoate binding site. Residues Val176 and 184–187 (KSSR) contribute to the ATP site.

The protein belongs to the pantothenate synthetase family. As to quaternary structure, homodimer.

The protein localises to the cytoplasm. The catalysed reaction is (R)-pantoate + beta-alanine + ATP = (R)-pantothenate + AMP + diphosphate + H(+). Its pathway is cofactor biosynthesis; (R)-pantothenate biosynthesis; (R)-pantothenate from (R)-pantoate and beta-alanine: step 1/1. Functionally, catalyzes the condensation of pantoate with beta-alanine in an ATP-dependent reaction via a pantoyl-adenylate intermediate. The protein is Pantothenate synthetase of Bacillus cereus (strain G9842).